The chain runs to 592 residues: Proteasome-associated ATPase (592 aa).

Residues 1 to 11 are compositionally biased toward acidic residues; sequence MTGYDSSEEAE. The tract at residues 1–24 is disordered; sequence MTGYDSSEEAERDSSPADGYRQTP. Residues 25-99 are a coiled coil; it reads AQLSAQIRVL…LKEEVDRLAQ (75 aa). 281–286 is a binding site for ATP; it reads GCGKTL. The docks into pockets in the proteasome alpha-ring stretch occupies residues 591–592; that stretch reads YL.

This sequence belongs to the AAA ATPase family. As to quaternary structure, homohexamer. Assembles into a hexameric ring structure that caps the 20S proteasome core. Strongly interacts with the prokaryotic ubiquitin-like protein Pup through a hydrophobic interface; the interacting region of ARC lies in its N-terminal coiled-coil domain. There is one Pup binding site per ARC hexamer ring. Upon ATP-binding, the C-terminus of ARC interacts with the alpha-rings of the proteasome core, possibly by binding to the intersubunit pockets.

The protein operates within protein degradation; proteasomal Pup-dependent pathway. ATPase which is responsible for recognizing, binding, unfolding and translocation of pupylated proteins into the bacterial 20S proteasome core particle. May be essential for opening the gate of the 20S proteasome via an interaction with its C-terminus, thereby allowing substrate entry and access to the site of proteolysis. Thus, the C-termini of the proteasomal ATPase may function like a 'key in a lock' to induce gate opening and therefore regulate proteolysis. The sequence is that of Proteasome-associated ATPase from Nakamurella multipartita (strain ATCC 700099 / DSM 44233 / CIP 104796 / JCM 9543 / NBRC 105858 / Y-104) (Microsphaera multipartita).